The sequence spans 596 residues: Succinate dehydrogenase flavoprotein subunit (596 aa).

FAD-binding positions include Gly-18–Gly-23, Ser-41–Gly-56, and Asp-225. A Tele-8alpha-FAD histidine modification is found at His-49. Positions 246 and 258 each coordinate substrate. The Proton acceptor role is filled by Arg-290. His-357 serves as a coordination point for substrate. Glu-391 provides a ligand contact to FAD. Arg-402 is a binding site for substrate. Ser-407–Leu-408 provides a ligand contact to FAD.

This sequence belongs to the FAD-dependent oxidoreductase 2 family. FRD/SDH subfamily. In terms of assembly, part of an enzyme complex containing four subunits: a flavoprotein, an iron-sulfur, cytochrome b-556, and a hydrophobic anchor protein. FAD is required as a cofactor.

It localises to the cell inner membrane. The enzyme catalyses a quinone + succinate = fumarate + a quinol. Its pathway is carbohydrate metabolism; tricarboxylic acid cycle; fumarate from succinate (bacterial route): step 1/1. This chain is Succinate dehydrogenase flavoprotein subunit (sdhA), found in Rickettsia bellii (strain RML369-C).